The sequence spans 924 residues: Exocyst complex component 2 (924 aa).

The 86-residue stretch at 8–93 (PLVTGISPNE…GTSTVSFKLL (86 aa)) folds into the IPT/TIG domain. A coiled-coil region spans residues 240–260 (QKLENVLNRASNTADTLFQEV). S431, S432, and S435 each carry phosphoserine. T440 is modified (phosphothreonine). N6-acetyllysine is present on K454.

Belongs to the SEC5 family. As to quaternary structure, the exocyst complex is composed of EXOC1, EXOC2, EXOC3, EXOC4, EXOC5, EXOC6, EXOC7 and EXOC8. Interacts with EXOC3L1. Interacts with GNEFR/DELGEF; this interaction occurs only in the presence of magnesium or manganese and is stimulated by dCTP or GTP. Interacts with RALA and RALB. Interacts with ARL13B; regulates ARL13B localization to the cilium membrane.

It localises to the midbody. The protein localises to the midbody ring. Its function is as follows. Component of the exocyst complex involved in the docking of exocytic vesicles with fusion sites on the plasma membrane. In Mus musculus (Mouse), this protein is Exocyst complex component 2 (Exoc2).